The following is a 542-amino-acid chain: GMP synthase [glutamine-hydrolyzing] (542 aa).

One can recognise a Glutamine amidotransferase type-1 domain in the interval 28-218; the sequence is IIVILDFGSQ…VYHICHCEPT (191 aa). C105 functions as the Nucleophile in the catalytic mechanism. Catalysis depends on residues H192 and E194. Residues 219 to 417 form the GMPS ATP-PPase domain; it reads WTTAAFIEES…IGLPEEIVRR (199 aa). 246-252 is a binding site for ATP; the sequence is SGGVDSS.

Homodimer.

It carries out the reaction XMP + L-glutamine + ATP + H2O = GMP + L-glutamate + AMP + diphosphate + 2 H(+). It functions in the pathway purine metabolism; GMP biosynthesis; GMP from XMP (L-Gln route): step 1/1. In terms of biological role, catalyzes the synthesis of GMP from XMP. The sequence is that of GMP synthase [glutamine-hydrolyzing] (guaA) from Synechocystis sp. (strain ATCC 27184 / PCC 6803 / Kazusa).